Consider the following 618-residue polypeptide: UvrABC system protein C (618 aa).

The region spanning 13-92 (DKPGVYLMKN…IKKYRPKYNI (80 aa)) is the GIY-YIG domain. A UVR domain is found at 204-239 (LDIVENFKLNMERAAENLEFEKAAMLRDKINIIEKI).

Belongs to the UvrC family. Interacts with UvrB in an incision complex.

Its subcellular location is the cytoplasm. Functionally, the UvrABC repair system catalyzes the recognition and processing of DNA lesions. UvrC both incises the 5' and 3' sides of the lesion. The N-terminal half is responsible for the 3' incision and the C-terminal half is responsible for the 5' incision. This chain is UvrABC system protein C, found in Clostridium botulinum (strain Langeland / NCTC 10281 / Type F).